A 441-amino-acid polypeptide reads, in one-letter code: tRNA-2-methylthio-N(6)-dimethylallyladenosine synthase (441 aa).

The 117-residue stretch at 3–119 (KKVSIRTFGC…LPGLIRNAFQ (117 aa)) folds into the MTTase N-terminal domain. The [4Fe-4S] cluster site is built by Cys-12, Cys-48, Cys-82, Cys-155, Cys-159, and Cys-162. The Radical SAM core domain maps to 141–371 (RSGSISAFIP…IDLQSGISGE (231 aa)). The 64-residue stretch at 374 to 437 (GNDVGSVQEV…QATLIGRCQD (64 aa)) folds into the TRAM domain.

The protein belongs to the methylthiotransferase family. MiaB subfamily. As to quaternary structure, monomer. [4Fe-4S] cluster serves as cofactor.

The protein resides in the cytoplasm. The enzyme catalyses N(6)-dimethylallyladenosine(37) in tRNA + (sulfur carrier)-SH + AH2 + 2 S-adenosyl-L-methionine = 2-methylsulfanyl-N(6)-dimethylallyladenosine(37) in tRNA + (sulfur carrier)-H + 5'-deoxyadenosine + L-methionine + A + S-adenosyl-L-homocysteine + 2 H(+). Catalyzes the methylthiolation of N6-(dimethylallyl)adenosine (i(6)A), leading to the formation of 2-methylthio-N6-(dimethylallyl)adenosine (ms(2)i(6)A) at position 37 in tRNAs that read codons beginning with uridine. The sequence is that of tRNA-2-methylthio-N(6)-dimethylallyladenosine synthase from Prosthecochloris aestuarii (strain DSM 271 / SK 413).